The sequence spans 180 residues: Stathmin-3 (180 aa).

Residues C22 and C24 are each lipidated (S-palmitoyl cysteine). Residues 38 to 180 (GDMEVKQLDK…NKEQREEMSG (143 aa)) form the SLD domain. Phosphoserine is present on residues S50, S60, S65, S68, S72, S73, and S81. The tract at residues 58-81 (LKSPSDLSPESPVLSSPPKRKDAS) is disordered. The segment covering 60–74 (SPSDLSPESPVLSSP) has biased composition (low complexity). Residues 75 to 179 (PKRKDASLEE…RNKEQREEMS (105 aa)) are a coiled coil.

Belongs to the stathmin family. In terms of assembly, interacts with STAT3. Interacts with CLU (secreted form); this interaction may act as an important modulator during neuronal differentiation. N-terminal palmitoylation promotes specific anchoring to the cytosolic leaflet of Golgi membranes and subsequent vesicular trafficking along dendrites and axons. Neuronal Stathmins are substrates for palmitoyltransferases ZDHHC3, ZDHHC7 and ZDHHC15. As to expression, neuron specific.

It is found in the golgi apparatus. The protein localises to the cell projection. It localises to the growth cone. Its subcellular location is the axon. The protein resides in the cytoplasm. It is found in the cytosol. In terms of biological role, exhibits microtubule-destabilizing activity, which is antagonized by STAT3. The protein is Stathmin-3 (Stmn3) of Rattus norvegicus (Rat).